Consider the following 105-residue polypeptide: ATP-dependent Clp protease adapter protein ClpS (105 aa).

It belongs to the ClpS family. Binds to the N-terminal domain of the chaperone ClpA.

Involved in the modulation of the specificity of the ClpAP-mediated ATP-dependent protein degradation. The protein is ATP-dependent Clp protease adapter protein ClpS of Streptomyces avermitilis (strain ATCC 31267 / DSM 46492 / JCM 5070 / NBRC 14893 / NCIMB 12804 / NRRL 8165 / MA-4680).